A 368-amino-acid chain; its full sequence is Putative transport protein bbp_117 (368 aa).

8 consecutive transmembrane segments (helical) span residues 13–35 (VIFS…RPFF), 39–61 (AWAS…LLWG), 68–90 (VMMT…NSLI), 159–181 (HFGR…YWNG), 216–238 (LGVV…ISGI), 248–270 (IIIF…IWLY), 277–299 (WGTV…RPIL), and 314–336 (GVIG…VLII).

The protein belongs to the autoinducer-2 exporter (AI-2E) (TC 2.A.86) family.

The protein localises to the cell membrane. This Buchnera aphidicola subsp. Baizongia pistaciae (strain Bp) protein is Putative transport protein bbp_117.